The sequence spans 323 residues: MAREEKPRKVILVGDGAVGSTFAFSMVQQGIAEELGIIDIAKEHVEGDAIDLADATPWTSPKNIYAADYPDCKDADLVVITAGAPQKPGETRLDLVNKNLKILSSIVEPVVESGFEGIFLVVANPVDILTHATWRMSGFPKDRVIGSGTSLDTGRLQKVIGKMENVDPSSVNAYMLGEHGDTEFPAWSYNNVAGVKVADWVKAHNMPESKLEDIHQEVKDMAYDIINKKGATFYGIGTASAMIAKAILNDEHRVLPLSVPMDGEYGLHDLHIGTPAVVGRKGLEQVIEMPLSDKEQELMTASADQLKKVMDKAFKETGVKVRQ.

NAD(+) is bound by residues Val-18, Asp-39, Tyr-69, and 83 to 84; that span reads GA. 2 residues coordinate substrate: Gln-86 and Arg-92. NAD(+) contacts are provided by residues Ser-105, 122 to 124, and Ser-147; that span reads VAN. 124-127 serves as a coordination point for substrate; sequence NPVD. 152–155 provides a ligand contact to substrate; sequence DTGR. His-179 functions as the Proton acceptor in the catalytic mechanism. Tyr-223 is modified (phosphotyrosine). Thr-232 is a substrate binding site.

It belongs to the LDH/MDH superfamily. LDH family. In terms of assembly, homotetramer.

It is found in the cytoplasm. The enzyme catalyses (S)-lactate + NAD(+) = pyruvate + NADH + H(+). It functions in the pathway fermentation; pyruvate fermentation to lactate; (S)-lactate from pyruvate: step 1/1. Under neutral conditions, the reaction is stimulated 4-fold by fructose 1,6-bisphosphate (FBP), however the L-lactate dehydrogenase is a nonallosteric enzyme. Calcium and zinc ions at 1 mM stimulate the activity almost 2-fold. Weakly inhibited by cadmium, cobalt and copper ions. In terms of biological role, catalyzes the conversion of lactate to pyruvate. In Lactobacillus helveticus (Lactobacillus suntoryeus), this protein is L-lactate dehydrogenase.